We begin with the raw amino-acid sequence, 555 residues long: Transcription factor kojR (555 aa).

The zn(2)-C6 fungal-type DNA-binding region spans 21-47; it reads CETCKLRKRKCDGHEPCTYCLRYEYQC. The tract at residues 51-73 is disordered; it reads PHPRRKPAASKSSARPSEEEDSP.

The protein resides in the nucleus. Transcription factor that regulates the gene cluster that mediates the biosynthesis of 5-hydroxy-2-hydroxymethyl-1,4-pyrone, also know as kojic acid, a by-product in the fermentation process of malting rice that acts as a chelation agent. Negatively regulates the expression of the kojic acid-related protein kap1. Improves the antioxidant capacity via the accumulation of kojic acid that is also a strong oxidant. This chain is Transcription factor kojR, found in Aspergillus oryzae (strain ATCC 42149 / RIB 40) (Yellow koji mold).